The chain runs to 719 residues: Phosphoribosylformylglycinamidine synthase subunit PurL (719 aa).

His47 is a catalytic residue. Residues Tyr50 and Lys89 each contribute to the ATP site. Glu91 serves as a coordination point for Mg(2+). Substrate is bound by residues 92 to 95 (SHNH) and Arg114. Catalysis depends on His93, which acts as the Proton acceptor. Mg(2+) is bound at residue Asp115. Gln238 is a substrate binding site. Residue Asp266 participates in Mg(2+) binding. A substrate-binding site is contributed by 310–312 (ESQ). Positions 488 and 525 each coordinate ATP. Residue Asn526 coordinates Mg(2+). Ser528 lines the substrate pocket.

This sequence belongs to the FGAMS family. Monomer. Part of the FGAM synthase complex composed of 1 PurL, 1 PurQ and 2 PurS subunits.

The protein resides in the cytoplasm. It carries out the reaction N(2)-formyl-N(1)-(5-phospho-beta-D-ribosyl)glycinamide + L-glutamine + ATP + H2O = 2-formamido-N(1)-(5-O-phospho-beta-D-ribosyl)acetamidine + L-glutamate + ADP + phosphate + H(+). Its pathway is purine metabolism; IMP biosynthesis via de novo pathway; 5-amino-1-(5-phospho-D-ribosyl)imidazole from N(2)-formyl-N(1)-(5-phospho-D-ribosyl)glycinamide: step 1/2. Functionally, part of the phosphoribosylformylglycinamidine synthase complex involved in the purines biosynthetic pathway. Catalyzes the ATP-dependent conversion of formylglycinamide ribonucleotide (FGAR) and glutamine to yield formylglycinamidine ribonucleotide (FGAM) and glutamate. The FGAM synthase complex is composed of three subunits. PurQ produces an ammonia molecule by converting glutamine to glutamate. PurL transfers the ammonia molecule to FGAR to form FGAM in an ATP-dependent manner. PurS interacts with PurQ and PurL and is thought to assist in the transfer of the ammonia molecule from PurQ to PurL. In Ruegeria pomeroyi (strain ATCC 700808 / DSM 15171 / DSS-3) (Silicibacter pomeroyi), this protein is Phosphoribosylformylglycinamidine synthase subunit PurL.